The primary structure comprises 199 residues: MKVNDMFWFWLILGIIALFIIVKAIVIVNQYEGGLIFRLGRVIGKLKPGINIIIPFLDVPVKVDMRTRVTDIPPQEMITKDNAVVKVDAVVYYRVIDVEKAILEVEDYEYAIINLAQTTLRAIIGSMELDEVLNKREYINSKLLEILDRETDAWGVRIEKVEVKEIDPPEDIKNAMAQQMKAERLKRAAILEAEGEKPE.

The helical transmembrane segment at 7-27 (FWFWLILGIIALFIIVKAIVI) threads the bilayer.

It belongs to the band 7/mec-2 family.

Its subcellular location is the membrane. This is an uncharacterized protein from Methanocaldococcus jannaschii (strain ATCC 43067 / DSM 2661 / JAL-1 / JCM 10045 / NBRC 100440) (Methanococcus jannaschii).